The following is an 821-amino-acid chain: E3 ubiquitin-protein ligase RSP5 (821 aa).

The C2 domain occupies 1-112 (MGSNLPAQPN…QMGGDEMLTR (112 aa)). 2 stretches are compositionally biased toward polar residues: residues 133–144 (TNLSTPNPNQAN) and 188–201 (LNPQ…RPTS). 2 disordered regions span residues 133–239 (TNLS…GWER) and 255–359 (RTTT…YFVD). The span at 202-217 (QIAPPNGAPPIANGQG) shows a compositional bias: low complexity. The WW 1 domain occupies 231-264 (GRLPAGWERREDNLGRTYYVDHNTRTTTWNRPSA). The span at 255 to 272 (RTTTWNRPSANYNEQTQR) shows a compositional bias: polar residues. The segment covering 281–296 (LERRAHQNRMLPEDRT) has biased composition (basic and acidic residues). The span at 297-312 (GASSPNLSETQPQAQT) shows a compositional bias: polar residues. Residues 320 to 339 (ASNSNVVSMMATGATTAGTG) show a composition bias toward low complexity. WW domains follow at residues 339-372 (GELP…DPRR) and 399-432 (GPLP…DPRL). Residues 488–821 (SASDLKKRLM…VEETLGFGQE (334 aa)) enclose the HECT domain. Cysteine 789 functions as the Glycyl thioester intermediate in the catalytic mechanism.

It belongs to the RSP5/NEDD4 family. As to quaternary structure, interacts with apyA and creD.

The protein localises to the cytoplasm. The catalysed reaction is S-ubiquitinyl-[E2 ubiquitin-conjugating enzyme]-L-cysteine + [acceptor protein]-L-lysine = [E2 ubiquitin-conjugating enzyme]-L-cysteine + N(6)-ubiquitinyl-[acceptor protein]-L-lysine.. Its pathway is protein modification; protein ubiquitination. In terms of biological role, E3 ubiquitin-protein ligase which accepts ubiquitin from an E2 ubiquitin-conjugating enzyme in the form of a thioester and then directly transfers the ubiquitin to targeted substrates. Probably involved in the regulatory network controlling carbon source utilization. Ubiquitinates 'Lys-528' of the uric acid/xanthine transporter uapA at the cell membrane, leading to its internalization, sorting into the endosomal pathway to the vacuolar lumen where it is eventually degraded. The protein is E3 ubiquitin-protein ligase RSP5 (hulA) of Emericella nidulans (strain FGSC A4 / ATCC 38163 / CBS 112.46 / NRRL 194 / M139) (Aspergillus nidulans).